The primary structure comprises 57 residues: Large ribosomal subunit protein uL30 (57 aa).

It belongs to the universal ribosomal protein uL30 family. As to quaternary structure, part of the 50S ribosomal subunit.

The sequence is that of Large ribosomal subunit protein uL30 from Acholeplasma laidlawii (strain PG-8A).